A 514-amino-acid chain; its full sequence is 2,3-bisphosphoglycerate-independent phosphoglycerate mutase (514 aa).

Mn(2+) is bound by residues aspartate 14 and serine 64. Serine 64 acts as the Phosphoserine intermediate in catalysis. Residues histidine 125, 155–156, arginine 187, arginine 193, 263–266, and lysine 336 contribute to the substrate site; these read RD and RADR. Positions 403, 407, 444, 445, and 463 each coordinate Mn(2+).

It belongs to the BPG-independent phosphoglycerate mutase family. As to quaternary structure, monomer. The cofactor is Mn(2+).

The catalysed reaction is (2R)-2-phosphoglycerate = (2R)-3-phosphoglycerate. It functions in the pathway carbohydrate degradation; glycolysis; pyruvate from D-glyceraldehyde 3-phosphate: step 3/5. Functionally, catalyzes the interconversion of 2-phosphoglycerate and 3-phosphoglycerate. The polypeptide is 2,3-bisphosphoglycerate-independent phosphoglycerate mutase (Shigella flexneri).